Consider the following 338-residue polypeptide: Ketol-acid reductoisomerase (NADP(+)) (338 aa).

One can recognise a KARI N-terminal Rossmann domain in the interval 1–181 (MRVYYDKDCD…GGGRSGIIET (181 aa)). NADP(+)-binding positions include 24-27 (YGSQ), arginine 47, serine 50, serine 52, and 82-85 (DENQ). Histidine 107 is a catalytic residue. Glycine 133 lines the NADP(+) pocket. Positions 182–327 (TFKDETETDL…EKLRGMMPWI (146 aa)) constitute a KARI C-terminal knotted domain. The Mg(2+) site is built by aspartate 190, glutamate 194, glutamate 226, and glutamate 230. Substrate is bound at residue serine 251.

It belongs to the ketol-acid reductoisomerase family. Requires Mg(2+) as cofactor.

It catalyses the reaction (2R)-2,3-dihydroxy-3-methylbutanoate + NADP(+) = (2S)-2-acetolactate + NADPH + H(+). The catalysed reaction is (2R,3R)-2,3-dihydroxy-3-methylpentanoate + NADP(+) = (S)-2-ethyl-2-hydroxy-3-oxobutanoate + NADPH + H(+). It participates in amino-acid biosynthesis; L-isoleucine biosynthesis; L-isoleucine from 2-oxobutanoate: step 2/4. The protein operates within amino-acid biosynthesis; L-valine biosynthesis; L-valine from pyruvate: step 2/4. In terms of biological role, involved in the biosynthesis of branched-chain amino acids (BCAA). Catalyzes an alkyl-migration followed by a ketol-acid reduction of (S)-2-acetolactate (S2AL) to yield (R)-2,3-dihydroxy-isovalerate. In the isomerase reaction, S2AL is rearranged via a Mg-dependent methyl migration to produce 3-hydroxy-3-methyl-2-ketobutyrate (HMKB). In the reductase reaction, this 2-ketoacid undergoes a metal-dependent reduction by NADPH to yield (R)-2,3-dihydroxy-isovalerate. This is Ketol-acid reductoisomerase (NADP(+)) from Chromohalobacter salexigens (strain ATCC BAA-138 / DSM 3043 / CIP 106854 / NCIMB 13768 / 1H11).